Here is a 218-residue protein sequence, read N- to C-terminus: Recombination protein RecR (218 aa).

Residues Cys56–Cys71 form a C4-type zinc finger. In terms of domain architecture, Toprim spans Ser79–Pro195.

It belongs to the RecR family.

May play a role in DNA repair. It seems to be involved in an RecBC-independent recombinational process of DNA repair. It may act with RecF and RecO. The protein is Recombination protein RecR of Corynebacterium diphtheriae (strain ATCC 700971 / NCTC 13129 / Biotype gravis).